We begin with the raw amino-acid sequence, 419 residues long: MSGNSSTDLYLFKKSLKELKGKKGKGTELISVYVPAGRRLSDISQYLRQELSQSSNIKSKTTMKNVQSAIEVILQRLKLLKEPLEMGVIIFAGMIPRGGPGTEKMEVYVLEPPEPVKTFVYRCDSLFYTDPLEDFIQDNEVYGVILVDRNEATIGTVRGKTITILKKLTSGVPGKFKAGGQSARRLERLIDDAAHQFMVRIGEYATESFMPILEEKKLKGLLLGGPGNTKNEFAEKDYLHHELKKKIIDTFDLCYTEEFGIRELLDKASDLLRDIDLMKEKNLIQRFFKELIKDDGGLSAYGEAQVMKYLEMGAIDTLIVTEDIGITRVTVKCNNCDITQEVNVKTNEMFKFEEQLKTKACPTCGGAMYIDEEKDIIEYLSDLCNMHNTDLIVVSTDTEEGSQISRAFKGMAAILRYKL.

This sequence belongs to the eukaryotic release factor 1 family. In terms of assembly, heterodimer of two subunits, one of which binds GTP.

The protein localises to the cytoplasm. Functionally, directs the termination of nascent peptide synthesis (translation) in response to the termination codons UAA, UAG and UGA. This is Peptide chain release factor subunit 1 from Methanococcus maripaludis (strain DSM 14266 / JCM 13030 / NBRC 101832 / S2 / LL).